The following is a 930-amino-acid chain: Translation initiation factor IF-2 (930 aa).

Residues 51-325 form a disordered region; the sequence is PGAGKSAAKP…TREIGGVKVP (275 aa). Low complexity-rich tracts occupy residues 56–111 and 121–162; these read SAAK…KPGV and TPAA…GNNP. A compositionally biased stretch (gly residues) spans 263–295; it reads RPGGGPGGGPGRPGGPGGRGGRGNAQGAFGRGG. Over residues 296 to 307 the composition is skewed to basic residues; the sequence is GPRKGRKSKRAK. The segment covering 308–320 has biased composition (basic and acidic residues); it reads RQEFEQQHTREIG. In terms of domain architecture, tr-type G spans 422-596; it reads PRPAVVTVMG…LTADAALELT (175 aa). Positions 431-438 are G1; that stretch reads GHVDHGKT. 431 to 438 is a GTP binding site; that stretch reads GHVDHGKT. A G2 region spans residues 456–460; that stretch reads GITQH. The interval 481–484 is G3; that stretch reads DTPG. GTP is bound by residues 481–485 and 535–538; these read DTPGH and NKID. The G4 stretch occupies residues 535–538; sequence NKID. A G5 region spans residues 571 to 573; the sequence is SAR.

The protein belongs to the TRAFAC class translation factor GTPase superfamily. Classic translation factor GTPase family. IF-2 subfamily.

It is found in the cytoplasm. In terms of biological role, one of the essential components for the initiation of protein synthesis. Protects formylmethionyl-tRNA from spontaneous hydrolysis and promotes its binding to the 30S ribosomal subunits. Also involved in the hydrolysis of GTP during the formation of the 70S ribosomal complex. The protein is Translation initiation factor IF-2 of Micrococcus luteus (strain ATCC 4698 / DSM 20030 / JCM 1464 / CCM 169 / CCUG 5858 / IAM 1056 / NBRC 3333 / NCIMB 9278 / NCTC 2665 / VKM Ac-2230) (Micrococcus lysodeikticus).